The primary structure comprises 409 residues: Na(+)/H(+) antiporter NhaA (409 aa).

Transmembrane regions (helical) follow at residues 13–33 (SGGI…NTFL), 58–78 (LILW…GLEL), 93–113 (IALP…IFYL), 120–140 (FALG…LGIL), 153–173 (IFLM…IALF), 176–196 (SELS…LFAL), 216–236 (VAVL…AFFI), 256–276 (LHGW…AGIS), 279–299 (GVGL…GLFV), 326–346 (FIQL…SLFI), and 363–383 (LAIL…LKFS).

It belongs to the NhaA Na(+)/H(+) (TC 2.A.33) antiporter family.

The protein resides in the cell inner membrane. It catalyses the reaction Na(+)(in) + 2 H(+)(out) = Na(+)(out) + 2 H(+)(in). Its function is as follows. Na(+)/H(+) antiporter that extrudes sodium in exchange for external protons. The protein is Na(+)/H(+) antiporter NhaA of Campylobacter concisus (strain 13826).